We begin with the raw amino-acid sequence, 308 residues long: Olfactory receptor 5H8 (308 aa).

At 1-28 (MDDENATLLTEFVLTGLTYQSEWKIPLF) the chain is on the extracellular side. The helical transmembrane segment at 29–49 (LAFLVIYLITIMANLGLIAVI) threads the bilayer. At 50–56 (WKDSHLH) the chain is on the cytoplasmic side. The chain crosses the membrane as a helical span at residues 57 to 77 (IPMYLFLGSLAFVDAWLSSSV). The Extracellular portion of the chain corresponds to 78–98 (TPKMLISFLAKSMIISVSECK). A disulfide bridge connects residues cysteine 97 and cysteine 179. The helical transmembrane segment at 99–119 (IQFFSFGISGTTECFLLATMA) threads the bilayer. Topologically, residues 120–133 (YDRYVAICKPLLYP) are cytoplasmic. A helical transmembrane segment spans residues 134 to 154 (VIMTNGLCIWLLVLSFIGGFL). Residues 155–195 (HALIHEGILFRLTFCNSNIIHHFYCDIIPLLKISCTDPSIN) lie on the Extracellular side of the membrane. Residues 196 to 216 (FLMLFILSGSIQVFTILTVLV) form a helical membrane-spanning segment. The Cytoplasmic portion of the chain corresponds to 217–238 (SYTFVLFTILKKKAKDIRKAFS). A helical transmembrane segment spans residues 239–259 (TCGAHLLSVSLYYGPLLFMYV). Over 260–270 (HPASPQADDQD) the chain is Extracellular. The chain crosses the membrane as a helical span at residues 271–291 (MVESLFYTVIIPFLNPIIYSL). Residues 292-308 (RNKQVIDSLTKTLKGNV) are Cytoplasmic-facing.

It belongs to the G-protein coupled receptor 1 family.

It localises to the cell membrane. In terms of biological role, odorant receptor. The protein is Olfactory receptor 5H8 of Homo sapiens (Human).